A 332-amino-acid polypeptide reads, in one-letter code: Putative symporter YfeH (332 aa).

This sequence belongs to the bile acid:sodium symporter (BASS) (TC 2.A.28) family.

The polypeptide is Putative symporter YfeH (yfeH) (Escherichia coli (strain K12)).